The sequence spans 537 residues: MPFKCIFLTGGVVSSLGKGLTAASLALLLERQNLKVAMLKLDPYLNVDPGTMNPYEHGEVYVTNDGIETDLDLGHYHRFSSVNLSKYSTATSGQIYARVIKREREGVYLGSTVQVIPHITNEIIEVILECAKENQPDVLIVEIGGTVGDIESLPFLEAIRQFRCEHAANCFSIHMTYVPYLKAAGEVKTKPTQHSVQSLRGIGIIPDAILCRSETPLSNEVKKKISLFCNVPDSAVFNVVDVEHSIYEMPLMLSREKISTFITEKLGLFTKQEDLSDWKILIERLRNPLPNKVRIGLVGKYVQHKDAYKSVFESITHAALSLNCAVDILPLDSEDPHFLEALEECDGCLVPGGFGIRGWEGKITAAKLCRERGIPYFGICLGMQVLVVEYARNVMDLEKANSTEMDQDTPHPVICMMDGQAALVATGGTMRLGAYPCTLSPGTKVYEAYGQSEIMERHRHRYEVNFDYIQQLKDHGLNIVGRCPQQGLCEIVETENHPWMVGVQFHPEFLSKLITPHPLFVGFIQAALLYSKNKSHV.

The interval methionine 1–leucine 268 is amidoligase domain. CTP is bound at residue serine 14. Serine 14 serves as a coordination point for UTP. Serine 15–leucine 20 contacts ATP. Tyrosine 55 contacts L-glutamine. Aspartate 72 provides a ligand contact to ATP. Mg(2+) contacts are provided by aspartate 72 and glutamate 142. CTP contacts are provided by residues aspartate 149–glutamate 151, lysine 188–glutamine 193, and lysine 224. UTP contacts are provided by residues lysine 188–glutamine 193 and lysine 224. The region spanning arginine 294 to asparagine 533 is the Glutamine amidotransferase type-1 domain. Glycine 353 contacts L-glutamine. Residue cysteine 380 is the Nucleophile; for glutamine hydrolysis of the active site. L-glutamine-binding positions include leucine 381–glutamine 384, glutamate 404, and arginine 461. Catalysis depends on residues histidine 506 and glutamate 508.

The protein belongs to the CTP synthase family. Homotetramer.

It carries out the reaction UTP + L-glutamine + ATP + H2O = CTP + L-glutamate + ADP + phosphate + 2 H(+). It catalyses the reaction L-glutamine + H2O = L-glutamate + NH4(+). The enzyme catalyses UTP + NH4(+) + ATP = CTP + ADP + phosphate + 2 H(+). It functions in the pathway pyrimidine metabolism; CTP biosynthesis via de novo pathway; CTP from UDP: step 2/2. Its activity is regulated as follows. Allosterically activated by GTP, when glutamine is the substrate; GTP has no effect on the reaction when ammonia is the substrate. The allosteric effector GTP functions by stabilizing the protein conformation that binds the tetrahedral intermediate(s) formed during glutamine hydrolysis. Inhibited by the product CTP, via allosteric rather than competitive inhibition. Catalyzes the ATP-dependent amination of UTP to CTP with either L-glutamine or ammonia as the source of nitrogen. Regulates intracellular CTP levels through interactions with the four ribonucleotide triphosphates. The polypeptide is CTP synthase (Chlamydia caviae (strain ATCC VR-813 / DSM 19441 / 03DC25 / GPIC) (Chlamydophila caviae)).